Reading from the N-terminus, the 234-residue chain is Large ribosomal subunit protein uL1 (234 aa).

Belongs to the universal ribosomal protein uL1 family. As to quaternary structure, part of the 50S ribosomal subunit.

Binds directly to 23S rRNA. The L1 stalk is quite mobile in the ribosome, and is involved in E site tRNA release. In terms of biological role, protein L1 is also a translational repressor protein, it controls the translation of the L11 operon by binding to its mRNA. In Geobacter metallireducens (strain ATCC 53774 / DSM 7210 / GS-15), this protein is Large ribosomal subunit protein uL1.